Consider the following 246-residue polypeptide: Protein lin-37 homolog (246 aa).

Residue Met-1 is modified to N-acetylmethionine. Glycyl lysine isopeptide (Lys-Gly) (interchain with G-Cter in SUMO2) cross-links involve residues Lys-5 and Lys-7. The segment covering 36–55 (DRERLDEEPGKTSLDTHNKD) has biased composition (basic and acidic residues). Disordered stretches follow at residues 36–90 (DRER…GGPQ) and 127–209 (PTVR…LIYR). 2 positions are modified to phosphoserine: Ser-135 and Ser-138. Residues 163-172 (LPPPTAPGPP) are compositionally biased toward pro residues. Thr-167 carries the phosphothreonine modification. Ser-182 and Ser-202 each carry phosphoserine.

As to quaternary structure, component of the DREAM complex (also named LINC complex) at least composed of E2F4, E2F5, LIN9, LIN37, LIN52, LIN54, MYBL1, MYBL2, RBL1, RBL2, RBBP4, TFDP1 and TFDP2. The complex exists in quiescent cells where it represses cell cycle-dependent genes. It dissociates in S phase when LIN9, LIN37, LIN52 and LIN54 form a subcomplex that binds to MYBL2.

The protein is Protein lin-37 homolog (LIN37) of Bos taurus (Bovine).